A 245-amino-acid chain; its full sequence is Probable phosphatase YcdX (245 aa).

The Zn(2+) site is built by His-7, His-9, His-15, His-40, Glu-73, His-101, His-131, Asp-192, and His-194.

It belongs to the PHP family. As to quaternary structure, homotrimer. Requires Zn(2+) as cofactor.

This Shigella flexneri serotype 5b (strain 8401) protein is Probable phosphatase YcdX.